Consider the following 332-residue polypeptide: MNNLTPENIRQTILATPFLLNRIRTEFPQLAAVLNDPNAFATTWQSINASQLLQIPSSTYSMGMPSFSEDDLFDVEVQRRIEEQIRQNAVTENMQSAIENHPEVFGQVYMLFVNVEINGHKVKAFVDSGAQATILSADCAEKCGLTRLLDTRFQGVAKGVGMAKILGCVHSAPLKIGDLYLPCRFTVIEGRDVDMLLGLDMLRRYQACIDLENNVLRIHGKEIPFLGESEIPKLLANVEPSANAHGLGIEPASKASASSPNPQSGTRLGTKESVAPNNEGSSNPPSLVNPPTDPGLNSKIAQLVSMGFDPLEAAQALDAANGDLDVAASFLL.

Residue aspartate 127 is part of the active site. The segment at 246 to 298 (GLGIEPASKASASSPNPQSGTRLGTKESVAPNNEGSSNPPSLVNPPTDPGLNS) is disordered. The span at 251–264 (PASKASASSPNPQS) shows a compositional bias: low complexity. A compositionally biased stretch (polar residues) spans 275-286 (APNNEGSSNPPS). In terms of domain architecture, UBA spans 291–332 (PTDPGLNSKIAQLVSMGFDPLEAAQALDAANGDLDVAASFLL).

This sequence belongs to the DDI1 family. In terms of assembly, homodimer. Interacts (via UBA domain) with polyubiquitin (polyUb) chains (via Lys-48-linked polyUbs). Has weak binding affinity for monoubiquitin. According to another report, has no affinity for monoubiquitin.

The protein resides in the cytoplasm. Its subcellular location is the cell membrane. In terms of biological role, recognizes and binds polyubiquitin chains. Acts as a linker between the 19S proteasome and polyubiquitinated proteins via UBA domain interactions with ubiquitin for their subsequent degradation. Aspartic protease. Appears to act as negative regulator of constitutive exocytosis. May act at the level of secretory vesicle docking and fusion as a competitive inhibitor of SNARE assembly. Required for S-phase checkpoint control. This chain is UBA domain-containing protein Mud1, found in Schizosaccharomyces pombe (strain 972 / ATCC 24843) (Fission yeast).